The following is a 543-amino-acid chain: MFSWLKRGGARGQQPEAIRTVTSALKELYRTKLLPLEEHYRFGAFHSPALEDADFDGKPMVLVAGQYSTGKTSFIQYLLEQEVPGSRVGPEPTTDCFVAVMHGDTEGTVPGNALVVDPDKPFRKLNPFGNTFLNRFMCAQLPNQVLESISIIDTPGILSGAKQRVSRGYDFPAVLRWFAERVDLIILLFDAHKLEISDEFSEAIGALRGHEDKIRVVLNKADMVETQQLMRVYGALMWALGKVVGTPEVLRVYIGSFWSQPLLVPDNRRLFELEEQDLFRDIQGLPRHAALRKLNDLVKRARLVRVHAYIISYLKKEMPSVFGKENKKKQLILKLPVIFAKIQLEHHISPGDFPDCQKMQELLMAHDFTKFHSLKPKLLEALDEMLTHDIAKLMPLLRQEELESTEVGVQGGAFEGTHMGPFVERGPDEAMEDGEEGSDDEAEWVVTKDKSKYDEIFYNLAPADGKLSGSKAKTWMVGTKLPNSVLGRIWKLSDVDRDGMLDDEEFALASHLIEAKLEGHGLPANLPRRLVPPSKRRHKGSAE.

Position 3 is a phosphoserine (serine 3). The region spanning 55–286 (FDGKPMVLVA…DLFRDIQGLP (232 aa)) is the Dynamin-type G domain. The G1 motif stretch occupies residues 65-72 (GQYSTGKT). Residue 65 to 72 (GQYSTGKT) coordinates ATP. The G2 motif stretch occupies residues 91–92 (EP). Residues 120 to 122 (KPF) carry the KPF loop; caveolar targeting motif. Positions 153–156 (DTPG) are G3 motif. Residues 219-222 (NKAD) form a G4 motif region. Residue lysine 220 coordinates ATP. Position 243 (valine 243) is a region of interest, G5 motif. Tryptophan 258 provides a ligand contact to ATP. The segment at 320-340 (SVFGKENKKKQLILKLPVIFA) is mediates membrane-binding. Phosphoserine is present on residues serine 438, serine 468, serine 470, serine 484, and serine 493. Positions 449 to 537 (DKSKYDEIFY…RRLVPPSKRR (89 aa)) constitute an EH domain. One can recognise an EF-hand domain in the interval 481-516 (LPNSVLGRIWKLSDVDRDGMLDDEEFALASHLIEAK). Residues aspartate 494, aspartate 496, aspartate 498, methionine 500, and glutamate 505 each contribute to the Ca(2+) site. The segment at 523–543 (PANLPRRLVPPSKRRHKGSAE) is disordered. Positions 534-543 (SKRRHKGSAE) are enriched in basic residues.

Belongs to the TRAFAC class dynamin-like GTPase superfamily. Dynamin/Fzo/YdjA family. EHD subfamily. Homodimer and homooligomer. Interacts with EHD1. May also interact with EHD3 and EHD4. Interacts with MYOF. Interacts with EHBP1. Interacts with FER1L5 (via second C2 domain). Interacts with CAV1 in a cholesterol-dependent manner. Interacts (via EH domain) with PACSIN2 (via NPF motifs); this interaction probably stabilizes the caveolae. In terms of tissue distribution, highly expressed in heart and moderately expressed in placenta, lung, and skeletal muscle.

It localises to the cell membrane. The protein localises to the membrane. Its subcellular location is the caveola. It is found in the endosome membrane. The protein resides in the cytoplasm. It localises to the cytosol. With respect to regulation, the very low intrinsic ATPase activity is increased upon interaction with liposomes. In terms of biological role, ATP- and membrane-binding protein that controls membrane reorganization/tubulation upon ATP hydrolysis. Plays a role in membrane trafficking between the plasma membrane and endosomes. Important for the internalization of GLUT4. Required for fusion of myoblasts to skeletal muscle myotubes. Required for normal translocation of FER1L5 to the plasma membrane. Regulates the equilibrium between cell surface-associated and cell surface-dissociated caveolae by constraining caveolae at the cell membrane. This is EH domain-containing protein 2 from Homo sapiens (Human).